The following is a 106-amino-acid chain: Large ribosomal subunit protein uL24 (106 aa).

This sequence belongs to the universal ribosomal protein uL24 family. In terms of assembly, part of the 50S ribosomal subunit.

In terms of biological role, one of two assembly initiator proteins, it binds directly to the 5'-end of the 23S rRNA, where it nucleates assembly of the 50S subunit. Its function is as follows. One of the proteins that surrounds the polypeptide exit tunnel on the outside of the subunit. This Blochmanniella floridana protein is Large ribosomal subunit protein uL24.